The following is a 507-amino-acid chain: Steroid 17-alpha-hydroxylase/17,20 lyase (507 aa).

Cys441 is a binding site for heme.

Belongs to the cytochrome P450 family. Heme is required as a cofactor.

The protein resides in the endoplasmic reticulum membrane. The protein localises to the microsome membrane. The catalysed reaction is a C21-steroid + reduced [NADPH--hemoprotein reductase] + O2 = a 17alpha-hydroxy-C21-steroid + oxidized [NADPH--hemoprotein reductase] + H2O + H(+). The enzyme catalyses progesterone + reduced [NADPH--hemoprotein reductase] + O2 = 17alpha-hydroxyprogesterone + oxidized [NADPH--hemoprotein reductase] + H2O + H(+). It carries out the reaction pregnenolone + reduced [NADPH--hemoprotein reductase] + O2 = 17alpha-hydroxypregnenolone + oxidized [NADPH--hemoprotein reductase] + H2O + H(+). It catalyses the reaction 17alpha-hydroxyprogesterone + reduced [NADPH--hemoprotein reductase] + O2 = androst-4-ene-3,17-dione + acetate + oxidized [NADPH--hemoprotein reductase] + H2O + 2 H(+). The catalysed reaction is 17alpha-hydroxyprogesterone + reduced [NADPH--hemoprotein reductase] + O2 = 16alpha,17alpha-dihydroxyprogesterone + oxidized [NADPH--hemoprotein reductase] + H2O + H(+). The enzyme catalyses 16alpha,17alpha-dihydroxyprogesterone + reduced [NADPH--hemoprotein reductase] + O2 = 6beta,16alpha,17alpha-trihydroxyprogesterone + oxidized [NADPH--hemoprotein reductase] + H2O + H(+). It carries out the reaction 17alpha-hydroxypregnenolone + reduced [NADPH--hemoprotein reductase] + O2 = 3beta-hydroxyandrost-5-en-17-one + acetate + oxidized [NADPH--hemoprotein reductase] + H2O + 2 H(+). It catalyses the reaction 16alpha,17alpha-dihydroxypregnenolone + reduced [NADPH--hemoprotein reductase] + O2 = 3beta,16alpha-dihydroxy-androst-5-en-17-one + acetate + oxidized [NADPH--hemoprotein reductase] + H2O + 2 H(+). The catalysed reaction is 3beta-hydroxyandrost-5-en-17-one + reduced [NADPH--hemoprotein reductase] + O2 = 3beta,16alpha-dihydroxy-androst-5-en-17-one + oxidized [NADPH--hemoprotein reductase] + H2O + H(+). The enzyme catalyses androst-4-ene-3,17-dione + reduced [NADPH--hemoprotein reductase] + O2 = 16alpha-hydroxyandrost-4-ene-3,17-dione + oxidized [NADPH--hemoprotein reductase] + H2O + H(+). It functions in the pathway steroid hormone biosynthesis. Its pathway is steroid biosynthesis; glucocorticoid biosynthesis. Regulated predominantly by intracellular cAMP levels. The 17,20-lyase activity is stimulated by cytochrome b5, which acts as an allosteric effector increasing the Vmax of the lyase activity. A cytochrome P450 monooxygenase involved in corticoid and androgen biosynthesis. Catalyzes 17-alpha hydroxylation of C21 steroids, which is common for both pathways. A second oxidative step, required only for androgen synthesis, involves an acyl-carbon cleavage. The 17-alpha hydroxy intermediates, as part of adrenal glucocorticoids biosynthesis pathway, are precursors of cortisol. Hydroxylates steroid hormones, pregnenolone and progesterone to form 17-alpha hydroxy metabolites, followed by the cleavage of the C17-C20 bond to form C19 steroids, dehydroepiandrosterone (DHEA) and androstenedione. Has 16-alpha hydroxylase activity. Catalyzes 16-alpha hydroxylation of 17-alpha hydroxy pregnenolone, followed by the cleavage of the C17-C20 bond to form 16-alpha-hydroxy DHEA. Also 16-alpha hydroxylates androgens, relevant for estriol synthesis. Mechanistically, uses molecular oxygen inserting one oxygen atom into a substrate, and reducing the second into a water molecule, with two electrons provided by NADPH via cytochrome P450 reductase (CPR; NADPH-ferrihemoprotein reductase). In Rattus norvegicus (Rat), this protein is Steroid 17-alpha-hydroxylase/17,20 lyase (Cyp17a1).